The primary structure comprises 100 residues: Large ribosomal subunit protein bL21 (100 aa).

It belongs to the bacterial ribosomal protein bL21 family. Part of the 50S ribosomal subunit. Contacts protein L20.

This protein binds to 23S rRNA in the presence of protein L20. The chain is Large ribosomal subunit protein bL21 from Wolbachia sp. subsp. Brugia malayi (strain TRS).